A 51-amino-acid polypeptide reads, in one-letter code: Cytoplasmic FMR1-interacting protein 1 (51 aa).

Belongs to the CYFIP family. As to quaternary structure, component of the WAVE1 complex composed of ABI2, CYFIP1 or CYFIP2, BRK1, NCKAP1 and WASF1/WAVE1. Within the complex, a heterodimer containing NCKAP1 and CYFIP1 interacts with a heterotrimer formed by WAVE1, ABI2 and BRK1. Component of the CYFIP1-EIF4E-FMR1 complex which is composed of CYFIP, EIF4E and FMR1. Interacts with FMR1 but does not bind to related proteins FXR1 or FXR2. Interaction with EIF4E stimulates FMR1 binding. Component of the WAVE2 complex composed of ABI1, CYFIP1/SRA1, NCKAP1/NAP1 (NCKAP1l/HEM1 in hematopoietic cells) and WASF2/WAVE2. Interacts with the active GTP-bound form of RAC1. Interacts through its C-terminus with the C-terminus of DPYSL2/CRMP2 which is necessary for DPYSL2-induced axon outgrowth. Interacts with NYAP1, NYAP2 and MYO16. Interacts with TMEM108 (via N-terminus); the interaction associates TMEM108 with the WAVE1 complex.

It localises to the cytoplasm. The protein localises to the perinuclear region. The protein resides in the cell projection. Its subcellular location is the lamellipodium. It is found in the ruffle. It localises to the synapse. The protein localises to the synaptosome. Its function is as follows. Component of the CYFIP1-EIF4E-FMR1 complex which binds to the mRNA cap and mediates translational repression. In the CYFIP1-EIF4E-FMR1 complex this subunit is an adapter between EIF4E and FMR1. Promotes the translation repression activity of FMR1 in brain probably by mediating its association with EIF4E and mRNA. Regulates formation of membrane ruffles and lamellipodia. Plays a role in axon outgrowth. Binds to F-actin but not to RNA. Part of the WAVE complex that regulates actin filament reorganization via its interaction with the Arp2/3 complex. Actin remodeling activity is regulated by RAC1. Regulator of epithelial morphogenesis. As component of the WAVE1 complex, required for BDNF-NTRK2 endocytic trafficking and signaling from early endosomes. The chain is Cytoplasmic FMR1-interacting protein 1 from Bos taurus (Bovine).